Reading from the N-terminus, the 400-residue chain is Acetate kinase (400 aa).

Residue Asn9 participates in Mg(2+) binding. Lys16 serves as a coordination point for ATP. Residue Arg90 participates in substrate binding. The active-site Proton donor/acceptor is the Asp147. ATP contacts are provided by residues 207–211, 282–284, and 330–334; these read HIGNG, DLR, and GIGEN. Glu385 is a binding site for Mg(2+).

Belongs to the acetokinase family. In terms of assembly, homodimer. The cofactor is Mg(2+). Requires Mn(2+) as cofactor.

Its subcellular location is the cytoplasm. It carries out the reaction acetate + ATP = acetyl phosphate + ADP. It functions in the pathway metabolic intermediate biosynthesis; acetyl-CoA biosynthesis; acetyl-CoA from acetate: step 1/2. Functionally, catalyzes the formation of acetyl phosphate from acetate and ATP. Can also catalyze the reverse reaction. The chain is Acetate kinase from Staphylococcus aureus (strain JH1).